The following is a 130-amino-acid chain: Small ribosomal subunit protein uS9 (130 aa).

This sequence belongs to the universal ribosomal protein uS9 family.

This is Small ribosomal subunit protein uS9 from Xylella fastidiosa (strain 9a5c).